A 59-amino-acid chain; its full sequence is Probable stress-associated endoplasmic reticulum protein (59 aa).

The segment at 1–30 (MSQSRTLRQKSQKYQENIEKRGVASPKKKE) is disordered. Residues 1 to 34 (MSQSRTLRQKSQKYQENIEKRGVASPKKKEDGLN) lie on the Cytoplasmic side of the membrane. The segment covering 16 to 30 (ENIEKRGVASPKKKE) has biased composition (basic and acidic residues). The helical; Anchor for type IV membrane protein transmembrane segment at 35–55 (INPYVLGFIIFVVVGSTLLQI) threads the bilayer. The Extracellular segment spans residues 56–59 (LKGQ).

This sequence belongs to the RAMP4 family.

The protein localises to the membrane. Its subcellular location is the endoplasmic reticulum membrane. Its function is as follows. May interact with target proteins during translocation into the lumen of the endoplasmic reticulum. May protect unfolded target proteins against degradation and facilitate correct glycosylation. This chain is Probable stress-associated endoplasmic reticulum protein (serp), found in Dictyostelium discoideum (Social amoeba).